The primary structure comprises 295 residues: Bifunctional protein FolD (295 aa).

NADP(+)-binding positions include Gly-166–Ser-168, Ser-191, and Ile-232.

This sequence belongs to the tetrahydrofolate dehydrogenase/cyclohydrolase family. Homodimer.

The enzyme catalyses (6R)-5,10-methylene-5,6,7,8-tetrahydrofolate + NADP(+) = (6R)-5,10-methenyltetrahydrofolate + NADPH. The catalysed reaction is (6R)-5,10-methenyltetrahydrofolate + H2O = (6R)-10-formyltetrahydrofolate + H(+). It participates in one-carbon metabolism; tetrahydrofolate interconversion. Its function is as follows. Catalyzes the oxidation of 5,10-methylenetetrahydrofolate to 5,10-methenyltetrahydrofolate and then the hydrolysis of 5,10-methenyltetrahydrofolate to 10-formyltetrahydrofolate. The polypeptide is Bifunctional protein FolD (Wolbachia sp. subsp. Brugia malayi (strain TRS)).